We begin with the raw amino-acid sequence, 199 residues long: Recombination protein RecR (199 aa).

A C4-type zinc finger spans residues 58 to 73; sequence CRTCFSLSDQPECRIC. The Toprim domain maps to 81–176; it reads SIICVVEKPT…NVTRIASGVP (96 aa).

The protein belongs to the RecR family.

In terms of biological role, may play a role in DNA repair. It seems to be involved in an RecBC-independent recombinational process of DNA repair. It may act with RecF and RecO. The sequence is that of Recombination protein RecR from Desulforapulum autotrophicum (strain ATCC 43914 / DSM 3382 / VKM B-1955 / HRM2) (Desulfobacterium autotrophicum).